The chain runs to 482 residues: Rhamnulokinase (482 aa).

13–17 provides a ligand contact to ATP; the sequence is ASSGR. Substrate is bound by residues Gly83 and 232–234; that span reads HDT. The Proton acceptor role is filled by Asp233. ATP is bound at residue Thr255. Position 292 (Asn292) interacts with substrate. Position 300 (Asn300) interacts with ATP. A disulfide bridge connects residues Cys349 and Cys366. Gly398 contributes to the ATP binding site. Cys409 and Cys413 are joined by a disulfide.

The protein belongs to the rhamnulokinase family. Requires Mg(2+) as cofactor.

It catalyses the reaction L-rhamnulose + ATP = L-rhamnulose 1-phosphate + ADP + H(+). It functions in the pathway carbohydrate degradation; L-rhamnose degradation; glycerone phosphate from L-rhamnose: step 2/3. Involved in the catabolism of L-rhamnose (6-deoxy-L-mannose). Catalyzes the transfer of the gamma-phosphate group from ATP to the 1-hydroxyl group of L-rhamnulose to yield L-rhamnulose 1-phosphate. The polypeptide is Rhamnulokinase (Mannheimia succiniciproducens (strain KCTC 0769BP / MBEL55E)).